The following is a 641-amino-acid chain: Isomalto-dextranase (641 aa).

Positions 1–39 (MMNLSRRTLLTTGSAATLAYALGMAGSAQAATAVTARPG) form a signal peptide, tat-type signal. Aspartate 227 functions as the Nucleophile in the catalytic mechanism. Aspartate 288 functions as the Proton donor in the catalytic mechanism. The CBM6 domain occupies 500-640 (TRYPAAFAAW…AINLNWIELD (141 aa)). The segment at 556-588 (SGYRYANATDDNTTSKTTTKKANPEKADRSTVD) is disordered. The segment covering 561-576 (ANATDDNTTSKTTTKK) has biased composition (low complexity). Positions 577 to 586 (ANPEKADRST) are enriched in basic and acidic residues.

This sequence belongs to the glycosyl hydrolase 27 family. In terms of processing, predicted to be exported by the Tat system. The position of the signal peptide cleavage has been experimentally proven.

It localises to the secreted. It carries out the reaction Hydrolysis of (1-&gt;6)-alpha-D-glucosidic linkages in polysaccharides, to remove successive isomaltose units from the non-reducing ends of the chains.. The polypeptide is Isomalto-dextranase (imd) (Arthrobacter globiformis).